The following is a 434-amino-acid chain: Nicotinate phosphoribosyltransferase (434 aa).

The residue at position 242 (His-242) is a Phosphohistidine; by autocatalysis.

Belongs to the NAPRTase family. Transiently phosphorylated on a His residue during the reaction cycle. Phosphorylation strongly increases the affinity for substrates and increases the rate of nicotinate D-ribonucleotide production. Dephosphorylation regenerates the low-affinity form of the enzyme, leading to product release.

The enzyme catalyses nicotinate + 5-phospho-alpha-D-ribose 1-diphosphate + ATP + H2O = nicotinate beta-D-ribonucleotide + ADP + phosphate + diphosphate. It functions in the pathway cofactor biosynthesis; NAD(+) biosynthesis; nicotinate D-ribonucleotide from nicotinate: step 1/1. Functionally, catalyzes the synthesis of beta-nicotinate D-ribonucleotide from nicotinate and 5-phospho-D-ribose 1-phosphate at the expense of ATP. The chain is Nicotinate phosphoribosyltransferase from Sinorhizobium fredii (strain NBRC 101917 / NGR234).